Here is a 74-residue protein sequence, read N- to C-terminus: MPVINIEDLTEKDKLKMEVDQLKKEVTLERMMVSKCCEEVRDYIEERSGEDPLVKGIPEDKNPFKELKGGCVIS.

Cysteine 71 carries the post-translational modification Cysteine methyl ester. Cysteine 71 carries the S-farnesyl cysteine lipid modification. A propeptide spans 72-74 (VIS) (removed in mature form).

It belongs to the G protein gamma family. In terms of assembly, g proteins are composed of 3 units, alpha, beta and gamma. As to expression, retinal rod outer segment.

It is found in the cell membrane. Guanine nucleotide-binding proteins (G proteins) are involved as a modulator or transducer in various transmembrane signaling systems. The beta and gamma chains are required for the GTPase activity, for replacement of GDP by GTP, and for G protein-effector interaction. The sequence is that of Guanine nucleotide-binding protein G(T) subunit gamma-T1 (Gngt1) from Mus musculus (Mouse).